Consider the following 171-residue polypeptide: Crossover junction endodeoxyribonuclease RuvC (171 aa).

Active-site residues include Asp-7, Glu-66, and Asp-138. Mg(2+)-binding residues include Asp-7, Glu-66, and Asp-138.

It belongs to the RuvC family. Homodimer which binds Holliday junction (HJ) DNA. The HJ becomes 2-fold symmetrical on binding to RuvC with unstacked arms; it has a different conformation from HJ DNA in complex with RuvA. In the full resolvosome a probable DNA-RuvA(4)-RuvB(12)-RuvC(2) complex forms which resolves the HJ. It depends on Mg(2+) as a cofactor.

It localises to the cytoplasm. The enzyme catalyses Endonucleolytic cleavage at a junction such as a reciprocal single-stranded crossover between two homologous DNA duplexes (Holliday junction).. In terms of biological role, the RuvA-RuvB-RuvC complex processes Holliday junction (HJ) DNA during genetic recombination and DNA repair. Endonuclease that resolves HJ intermediates. Cleaves cruciform DNA by making single-stranded nicks across the HJ at symmetrical positions within the homologous arms, yielding a 5'-phosphate and a 3'-hydroxyl group; requires a central core of homology in the junction. The consensus cleavage sequence is 5'-(A/T)TT(C/G)-3'. Cleavage occurs on the 3'-side of the TT dinucleotide at the point of strand exchange. HJ branch migration catalyzed by RuvA-RuvB allows RuvC to scan DNA until it finds its consensus sequence, where it cleaves and resolves the cruciform DNA. The polypeptide is Crossover junction endodeoxyribonuclease RuvC (Francisella tularensis subsp. holarctica (strain FTNF002-00 / FTA)).